Reading from the N-terminus, the 251-residue chain is Ubiquinone/menaquinone biosynthesis C-methyltransferase UbiE (251 aa).

Residues T74, D95, and N123–A124 contribute to the S-adenosyl-L-methionine site.

The protein belongs to the class I-like SAM-binding methyltransferase superfamily. MenG/UbiE family.

It catalyses the reaction a 2-demethylmenaquinol + S-adenosyl-L-methionine = a menaquinol + S-adenosyl-L-homocysteine + H(+). The catalysed reaction is a 2-methoxy-6-(all-trans-polyprenyl)benzene-1,4-diol + S-adenosyl-L-methionine = a 5-methoxy-2-methyl-3-(all-trans-polyprenyl)benzene-1,4-diol + S-adenosyl-L-homocysteine + H(+). Its pathway is quinol/quinone metabolism; menaquinone biosynthesis; menaquinol from 1,4-dihydroxy-2-naphthoate: step 2/2. It participates in cofactor biosynthesis; ubiquinone biosynthesis. Functionally, methyltransferase required for the conversion of demethylmenaquinol (DMKH2) to menaquinol (MKH2) and the conversion of 2-polyprenyl-6-methoxy-1,4-benzoquinol (DDMQH2) to 2-polyprenyl-3-methyl-6-methoxy-1,4-benzoquinol (DMQH2). In Shewanella pealeana (strain ATCC 700345 / ANG-SQ1), this protein is Ubiquinone/menaquinone biosynthesis C-methyltransferase UbiE.